The sequence spans 188 residues: Probable manganese efflux pump MntP (188 aa).

The next 5 helical transmembrane spans lie at 3–23 (ITAT…ASIG), 66–86 (LEWN…RMII), 106–128 (WLLV…GLAF), 143–163 (ATLI…PILG), and 168–188 (ILGG…HFHG).

This sequence belongs to the MntP (TC 9.B.29) family.

It localises to the cell inner membrane. Probably functions as a manganese efflux pump. This is Probable manganese efflux pump MntP from Escherichia fergusonii (strain ATCC 35469 / DSM 13698 / CCUG 18766 / IAM 14443 / JCM 21226 / LMG 7866 / NBRC 102419 / NCTC 12128 / CDC 0568-73).